The chain runs to 330 residues: uncharacterized protein (330 aa).

The JmjC domain maps to 96–256 (AALEFDFTDL…LMLAALRKKL (161 aa)). Fe cation contacts are provided by His145, Asp147, and His224.

It belongs to the ROX family. Requires Fe(2+) as cofactor.

This is an uncharacterized protein from Bacillus subtilis (strain 168).